The sequence spans 267 residues: MQRIAIPASANAPLTTTPVKIAIRNLEFYYGTFQALKQINLEIPEKRVTALIGPSGCGKSTLLRIFNRIYALYPKLEARGEVLLDGENILSPKYSINRLRSKVGMVFQKPVPFPMTIYENVAYGIRHHEVMSKSQMNDRVEQALQQSALWEEVKDKLNQNALGLSGGQQQRLCIARAIALTPSVLLLDEPTSALDPISTSRIEQLIEELKTKYTIVIVTHNMQQAARVSDYTGFMYLGDLIEHDRTETIFSQPSKQQTEDYITGRFG.

The ABC transporter domain occupies 21–262 (IAIRNLEFYY…PSKQQTEDYI (242 aa)). An ATP-binding site is contributed by 53–60 (GPSGCGKS).

Belongs to the ABC transporter superfamily. Phosphate importer (TC 3.A.1.7) family. The complex is composed of two ATP-binding proteins (PstB), two transmembrane proteins (PstC and PstA) and a solute-binding protein (PstS).

The protein localises to the cell inner membrane. It carries out the reaction phosphate(out) + ATP + H2O = ADP + 2 phosphate(in) + H(+). Functionally, part of the ABC transporter complex PstSACB involved in phosphate import. Responsible for energy coupling to the transport system. This chain is Phosphate import ATP-binding protein PstB, found in Xylella fastidiosa (strain 9a5c).